A 270-amino-acid chain; its full sequence is Hairy and enhancer of split-related protein helt (270 aa).

A disordered region spans residues M1–R24. Residues K59 to L114 form the bHLH domain. The 36-residue stretch at F136–L171 folds into the Orange domain.

This sequence belongs to the HEY family.

The protein localises to the nucleus. Transcriptional repressor which binds preferentially to the canonical E box sequence 5'-CACGCG-3'. The chain is Hairy and enhancer of split-related protein helt (helt) from Danio rerio (Zebrafish).